The primary structure comprises 142 residues: Large ribosomal subunit protein uL11 (142 aa).

It belongs to the universal ribosomal protein uL11 family. In terms of assembly, part of the ribosomal stalk of the 50S ribosomal subunit. Interacts with L10 and the large rRNA to form the base of the stalk. L10 forms an elongated spine to which L12 dimers bind in a sequential fashion forming a multimeric L10(L12)X complex. In terms of processing, one or more lysine residues are methylated.

In terms of biological role, forms part of the ribosomal stalk which helps the ribosome interact with GTP-bound translation factors. The sequence is that of Large ribosomal subunit protein uL11 from Vibrio cholerae serotype O1 (strain ATCC 39541 / Classical Ogawa 395 / O395).